Consider the following 305-residue polypeptide: Homoserine O-acetyltransferase (305 aa).

C142 serves as the catalytic Acyl-thioester intermediate. Positions 163 and 192 each coordinate substrate. H235 serves as the catalytic Proton acceptor. Residue E237 is part of the active site. Residue R249 participates in substrate binding.

The protein belongs to the MetA family.

The protein localises to the cytoplasm. The catalysed reaction is L-homoserine + acetyl-CoA = O-acetyl-L-homoserine + CoA. The protein operates within amino-acid biosynthesis; L-methionine biosynthesis via de novo pathway; O-acetyl-L-homoserine from L-homoserine: step 1/1. In terms of biological role, transfers an acetyl group from acetyl-CoA to L-homoserine, forming acetyl-L-homoserine. This Hyphomonas neptunium (strain ATCC 15444) protein is Homoserine O-acetyltransferase.